Consider the following 519-residue polypeptide: MNTSISSQPPCIRIFDTTLRDGEQSPGCSMPAQQKLVMARALDALGVDIIETGFPASSQSDYEAMTLIARELRRPTLAVLSRCLQADIETSARALESATKPRLHVFLSTSPLHREHKLRMSKEQVLESVHKHVSLSRTLIDDVEFSAEDATRTEEDFLIEVTRVAIAAGATTINLPDTVGFSTPEEIRNMFTRVIANVEGANKVIFSAHCHDDLGLAVANSLAAIEGGARQIECTINGIGERAGNCALEELTMVLKVRNAFYNIDTSIHTSRIVSTSQLLQRLVGMPVQRNKAVVGANAFAHESGIHQHGMLRHRGTYEIMRPQEVGWVCSHMVLGRHSGRAAVEQRLRALGYLLEEEDLKLVFEEFKQLCEKQRLVTDVDLQVLMQDTTVQHGYRLASMTISDVGNRANALVELSDPQGQRVAETAQGNGPVDALFGALAAATGVKLELDSYQVHSVGIGADARGEANLSVRHNDTQYEGTGTSKDIIEASALAWLEVANRLLRNPENMQNKQNTALA.

In terms of domain architecture, Pyruvate carboxyltransferase spans 12 to 274; that stretch reads IRIFDTTLRD…DTSIHTSRIV (263 aa). Residues Asp-21, His-209, His-211, and Asn-245 each coordinate Mn(2+). Residues 396–519 are regulatory domain; the sequence is RLASMTISDV…MQNKQNTALA (124 aa).

This sequence belongs to the alpha-IPM synthase/homocitrate synthase family. LeuA type 1 subfamily. In terms of assembly, homodimer. Mn(2+) is required as a cofactor.

It localises to the cytoplasm. It carries out the reaction 3-methyl-2-oxobutanoate + acetyl-CoA + H2O = (2S)-2-isopropylmalate + CoA + H(+). The protein operates within amino-acid biosynthesis; L-leucine biosynthesis; L-leucine from 3-methyl-2-oxobutanoate: step 1/4. Catalyzes the condensation of the acetyl group of acetyl-CoA with 3-methyl-2-oxobutanoate (2-ketoisovalerate) to form 3-carboxy-3-hydroxy-4-methylpentanoate (2-isopropylmalate). The sequence is that of 2-isopropylmalate synthase from Xylella fastidiosa (strain M23).